Here is a 204-residue protein sequence, read N- to C-terminus: Proteasome subunit beta type-3-A (204 aa).

This sequence belongs to the peptidase T1B family. In terms of assembly, component of the 20S core complex of the 26S proteasome. The 26S proteasome is composed of a core protease (CP), known as the 20S proteasome, capped at one or both ends by the 19S regulatory particle (RP/PA700). The 20S proteasome core is composed of 28 subunits that are arranged in four stacked rings, resulting in a barrel-shaped structure. The two end rings are each formed by seven alpha subunits, and the two central rings are each formed by seven beta subunits. The catalytic chamber with the active sites is on the inside of the barrel.

The protein resides in the cytoplasm. It localises to the nucleus. Functionally, non-catalytic component of the proteasome, a multicatalytic proteinase complex which is characterized by its ability to cleave peptides with Arg, Phe, Tyr, Leu, and Glu adjacent to the leaving group at neutral or slightly basic pH. The proteasome has an ATP-dependent proteolytic activity. In Arabidopsis thaliana (Mouse-ear cress), this protein is Proteasome subunit beta type-3-A (PBC1).